Consider the following 333-residue polypeptide: tRNA N6-adenosine threonylcarbamoyltransferase (333 aa).

Positions 110 and 114 each coordinate Fe cation. Substrate is bound by residues 133–137 (IVSGG), D166, G179, D183, and N275. Fe cation is bound at residue D302.

It belongs to the KAE1 / TsaD family. Fe(2+) serves as cofactor.

It is found in the cytoplasm. The enzyme catalyses L-threonylcarbamoyladenylate + adenosine(37) in tRNA = N(6)-L-threonylcarbamoyladenosine(37) in tRNA + AMP + H(+). Required for the formation of a threonylcarbamoyl group on adenosine at position 37 (t(6)A37) in tRNAs that read codons beginning with adenine. Is involved in the transfer of the threonylcarbamoyl moiety of threonylcarbamoyl-AMP (TC-AMP) to the N6 group of A37, together with TsaE and TsaB. TsaD likely plays a direct catalytic role in this reaction. This Thermodesulfovibrio yellowstonii (strain ATCC 51303 / DSM 11347 / YP87) protein is tRNA N6-adenosine threonylcarbamoyltransferase.